A 340-amino-acid polypeptide reads, in one-letter code: Spike protein P5 (340 aa).

Positions 2–122 (ANQQIGGSTV…NFPIALGVWP (121 aa)) are domain-1. The Collagen-like domain maps to 123–141 (SGIKGDKGDPGAPGPAGGT). Residues 142–340 (VVVEDSGASF…IINITAAKIN (199 aa)) are domain-2.

Homotrimer.

The protein resides in the virion. Functionally, in association with P31 and P2, forms the spike complexes located at the 5-fold vertices of the capsid. Essential for viral infectivity. This is Spike protein P5 (V) from Enterobacteria phage PRD1 (Bacteriophage PRD1).